The primary structure comprises 244 residues: Small ribosomal subunit protein eS4 (244 aa).

The S4 RNA-binding domain occupies 43–108; that stretch reads LPLLLIVRDI…NYRVLFDRKG (66 aa).

Belongs to the eukaryotic ribosomal protein eS4 family.

The protein is Small ribosomal subunit protein eS4 (rps4e) of Methanocaldococcus jannaschii (strain ATCC 43067 / DSM 2661 / JAL-1 / JCM 10045 / NBRC 100440) (Methanococcus jannaschii).